The primary structure comprises 103 residues: CLAVATA3/ESR (CLE)-related protein 22 (103 aa).

The signal sequence occupies residues Met-1–Ala-34. Positions Ser-37–Arg-103 are disordered. Residues Ile-41–Leu-50 show a composition bias toward basic residues. The span at Asn-66–Thr-76 shows a compositional bias: polar residues. The residue at position 97 (Pro-97) is a Hydroxyproline. An O-linked (Ara...) hydroxyproline glycan is attached at Pro-97.

It belongs to the CLV3/ESR signal peptide family. Post-translationally, the O-glycosylation (arabinosylation) of the hydroxyproline Pro-97 enhances binding affinity of the CLE22p peptide for its receptor. In terms of tissue distribution, mostly expressed in stems and apex, and, to a lower extent, in seedlings, leaves, flowers and siliques.

It localises to the secreted. Its subcellular location is the extracellular space. In terms of biological role, extracellular signal peptide that regulates cell fate. Represses root apical meristem maintenance. The polypeptide is CLAVATA3/ESR (CLE)-related protein 22 (Arabidopsis thaliana (Mouse-ear cress)).